Here is a 403-residue protein sequence, read N- to C-terminus: Phosphoglycerate kinase (403 aa).

Substrate contacts are provided by residues 21 to 23 (DFN), arginine 36, 59 to 62 (HLGR), arginine 119, and arginine 159. Residues lysine 214, glycine 301, glutamate 332, and 359 to 362 (GGDS) each bind ATP.

Belongs to the phosphoglycerate kinase family. As to quaternary structure, monomer.

The protein resides in the cytoplasm. The enzyme catalyses (2R)-3-phosphoglycerate + ATP = (2R)-3-phospho-glyceroyl phosphate + ADP. It functions in the pathway carbohydrate degradation; glycolysis; pyruvate from D-glyceraldehyde 3-phosphate: step 2/5. The chain is Phosphoglycerate kinase from Lactobacillus delbrueckii subsp. lactis.